The primary structure comprises 330 residues: Probable transposase for insertion sequence element ISH11 (330 aa).

The protein belongs to the transposase 11 family.

Involved in the transposition of the insertion sequence ISH11. The sequence is that of Probable transposase for insertion sequence element ISH11 from Halobacterium salinarum (strain ATCC 29341 / DSM 671 / R1).